Consider the following 410-residue polypeptide: uncharacterized protein (410 aa).

12 helical membrane-spanning segments follow: residues Ile-27–Ile-47, Ser-63–Leu-83, Leu-97–Val-117, Leu-118–Ile-138, Asn-145–Gly-165, Ile-180–Leu-200, Val-228–Asn-248, Leu-254–Leu-274, Asn-293–Asn-313, Phe-316–Ser-332, Tyr-355–Phe-375, and Gln-378–Phe-398.

The protein belongs to the major facilitator superfamily.

The protein resides in the cell membrane. This is an uncharacterized protein from Buchnera aphidicola subsp. Acyrthosiphon pisum (strain APS) (Acyrthosiphon pisum symbiotic bacterium).